Consider the following 325-residue polypeptide: Acetyl-coenzyme A carboxylase carboxyl transferase subunit alpha (325 aa).

One can recognise a CoA carboxyltransferase C-terminal domain in the interval R38 to S292.

This sequence belongs to the AccA family. Acetyl-CoA carboxylase is a heterohexamer composed of biotin carboxyl carrier protein (AccB), biotin carboxylase (AccC) and two subunits each of ACCase subunit alpha (AccA) and ACCase subunit beta (AccD).

Its subcellular location is the cytoplasm. It catalyses the reaction N(6)-carboxybiotinyl-L-lysyl-[protein] + acetyl-CoA = N(6)-biotinyl-L-lysyl-[protein] + malonyl-CoA. It functions in the pathway lipid metabolism; malonyl-CoA biosynthesis; malonyl-CoA from acetyl-CoA: step 1/1. Component of the acetyl coenzyme A carboxylase (ACC) complex. First, biotin carboxylase catalyzes the carboxylation of biotin on its carrier protein (BCCP) and then the CO(2) group is transferred by the carboxyltransferase to acetyl-CoA to form malonyl-CoA. In Bacillus velezensis (strain DSM 23117 / BGSC 10A6 / LMG 26770 / FZB42) (Bacillus amyloliquefaciens subsp. plantarum), this protein is Acetyl-coenzyme A carboxylase carboxyl transferase subunit alpha.